A 59-amino-acid chain; its full sequence is Bdellastasin (59 aa).

Disulfide bonds link Cys10–Cys21, Cys15–Cys26, Cys28–Cys48, Cys33–Cys52, and Cys37–Cys54. An Antistasin-like domain is found at 28–54 (CSDLHCKVKCEHGFKKDDNGCEYACIC).

The protein resides in the secreted. Its function is as follows. Strong inhibitor of mammalian trypsin, plasmin and acrosin. The chain is Bdellastasin from Hirudo medicinalis (Medicinal leech).